A 145-amino-acid polypeptide reads, in one-letter code: D-aminoacyl-tRNA deacylase (145 aa).

The short motif at 137-138 (GP) is the Gly-cisPro motif, important for rejection of L-amino acids element.

This sequence belongs to the DTD family. Homodimer.

It is found in the cytoplasm. It carries out the reaction glycyl-tRNA(Ala) + H2O = tRNA(Ala) + glycine + H(+). The catalysed reaction is a D-aminoacyl-tRNA + H2O = a tRNA + a D-alpha-amino acid + H(+). An aminoacyl-tRNA editing enzyme that deacylates mischarged D-aminoacyl-tRNAs. Also deacylates mischarged glycyl-tRNA(Ala), protecting cells against glycine mischarging by AlaRS. Acts via tRNA-based rather than protein-based catalysis; rejects L-amino acids rather than detecting D-amino acids in the active site. By recycling D-aminoacyl-tRNA to D-amino acids and free tRNA molecules, this enzyme counteracts the toxicity associated with the formation of D-aminoacyl-tRNA entities in vivo and helps enforce protein L-homochirality. The sequence is that of D-aminoacyl-tRNA deacylase from Shewanella woodyi (strain ATCC 51908 / MS32).